Consider the following 24-residue polypeptide: MDTQGFSCLLLLISEIDLSVKRRI.

Belongs to the humanin family.

The protein localises to the secreted. It is found in the cytoplasm. Its function is as follows. Plays a role as a neuroprotective and antiapoptotic factor. This chain is Humanin-like 13, found in Homo sapiens (Human).